The chain runs to 111 residues: T cell receptor alpha variable 18 (111 aa).

Residues 1-20 (MLSASCSGLVILLIFRRTSG) form the signal peptide. The Ig-like domain maps to 21–111 (DSVTQTEGPV…DSAVYYCALR (91 aa)). Asn41 is a glycosylation site (N-linked (GlcNAc...) asparagine). Cys42 and Cys108 are oxidised to a cystine.

Alpha-beta TR is a heterodimer composed of an alpha and beta chain; disulfide-linked. The alpha-beta TR is associated with the transmembrane signaling CD3 coreceptor proteins to form the TR-CD3 (TcR or TCR). The assembly of alpha-beta TR heterodimers with CD3 occurs in the endoplasmic reticulum where a single alpha-beta TR heterodimer associates with one CD3D-CD3E heterodimer, one CD3G-CD3E heterodimer and one CD247 homodimer forming a stable octameric structure. CD3D-CD3E and CD3G-CD3E heterodimers preferentially associate with TR alpha and TR beta chains, respectively. The association of the CD247 homodimer is the last step of TcR assembly in the endoplasmic reticulum and is required for transport to the cell surface.

The protein localises to the cell membrane. V region of the variable domain of T cell receptor (TR) alpha chain that participates in the antigen recognition. Alpha-beta T cell receptors are antigen specific receptors which are essential to the immune response and are present on the cell surface of T lymphocytes. Recognize peptide-major histocompatibility (MH) (pMH) complexes that are displayed by antigen presenting cells (APC), a prerequisite for efficient T cell adaptive immunity against pathogens. Binding of alpha-beta TR to pMH complex initiates TR-CD3 clustering on the cell surface and intracellular activation of LCK that phosphorylates the ITAM motifs of CD3G, CD3D, CD3E and CD247 enabling the recruitment of ZAP70. In turn ZAP70 phosphorylates LAT, which recruits numerous signaling molecules to form the LAT signalosome. The LAT signalosome propagates signal branching to three major signaling pathways, the calcium, the mitogen-activated protein kinase (MAPK) kinase and the nuclear factor NF-kappa-B (NF-kB) pathways, leading to the mobilization of transcription factors that are critical for gene expression and essential for T cell growth and differentiation. The T cell repertoire is generated in the thymus, by V-(D)-J rearrangement. This repertoire is then shaped by intrathymic selection events to generate a peripheral T cell pool of self-MH restricted, non-autoaggressive T cells. Post-thymic interaction of alpha-beta TR with the pMH complexes shapes TR structural and functional avidity. This is T cell receptor alpha variable 18 from Homo sapiens (Human).